Reading from the N-terminus, the 81-residue chain is Putative membrane protein insertion efficiency factor (81 aa).

Residues 59 to 81 (PWNPGGYDPVPPIKTSRSSSMAE) are disordered.

The protein belongs to the UPF0161 family.

The protein resides in the cell inner membrane. Could be involved in insertion of integral membrane proteins into the membrane. In Azotobacter vinelandii (strain DJ / ATCC BAA-1303), this protein is Putative membrane protein insertion efficiency factor.